The sequence spans 1097 residues: Putative regulator of nonsense transcripts 1 (1097 aa).

Residues 42–53 show a composition bias toward low complexity; that stretch reads SQTQTQGHTQSQ. Residues 42–67 form a disordered region; sequence SQTQTQGHTQSQLDNQLNGPDDGLHN. Positions 96-254 constitute a Upf1 CH-rich domain; sequence TKDLPVHACR…NKLEELWKDN (159 aa). Residues Cys-104, Cys-108, Cys-119, Ser-122, Cys-127, His-137, His-141, Cys-147, Cys-165, Cys-168, Cys-191, and Cys-195 each contribute to the Zn(2+) site. The tract at residues 104-137 is C3H; the sequence is CRSYCGIHDPACVVYCNTSKKWFCNGRGNTSGSH. The interval 119–147 is CC/SHH/C; that stretch reads CNTSKKWFCNGRGNTSGSHIVNHLVRAKC. The interval 165-195 is C4; it reads CYNCGCRNVFLLGFIPAKADSVVVLLCRQPC. ATP contacts are provided by residues Gln-457, 474–481, Tyr-683, and Glu-813; that span reads GPPGTGKT. Residues 977 to 998 are disordered; that stretch reads QGQTNGPAAGRGAMKGKSGRGG.

This sequence belongs to the DNA2/NAM7 helicase family.

The protein localises to the cytoplasm. The protein resides in the P-body. The enzyme catalyses ATP + H2O = ADP + phosphate + H(+). RNA-dependent helicase required for nonsense-mediated decay (NMD) of aberrant mRNAs containing premature stop codons and modulates the expression level of normal mRNAs. The formation of an rent1-rent2-rent3 surveillance complex is believed to activate NMD. This is Putative regulator of nonsense transcripts 1 (rent1) from Takifugu rubripes (Japanese pufferfish).